Reading from the N-terminus, the 349-residue chain is Anthranilate phosphoribosyltransferase (349 aa).

5-phospho-alpha-D-ribose 1-diphosphate-binding positions include G82, 85-86 (GD), 92-95 (NVST), 110-118 (KHGNRAVSG), and S122. Residue G82 coordinates anthranilate. Position 94 (S94) interacts with Mg(2+). An anthranilate-binding site is contributed by N113. R168 contacts anthranilate. D227 and E228 together coordinate Mg(2+).

This sequence belongs to the anthranilate phosphoribosyltransferase family. As to quaternary structure, homodimer. Mg(2+) serves as cofactor.

It carries out the reaction N-(5-phospho-beta-D-ribosyl)anthranilate + diphosphate = 5-phospho-alpha-D-ribose 1-diphosphate + anthranilate. It participates in amino-acid biosynthesis; L-tryptophan biosynthesis; L-tryptophan from chorismate: step 2/5. Its function is as follows. Catalyzes the transfer of the phosphoribosyl group of 5-phosphorylribose-1-pyrophosphate (PRPP) to anthranilate to yield N-(5'-phosphoribosyl)-anthranilate (PRA). This Pseudomonas fluorescens (strain SBW25) protein is Anthranilate phosphoribosyltransferase.